A 324-amino-acid polypeptide reads, in one-letter code: tRNA(Ile)-lysidine synthase (324 aa).

An ATP-binding site is contributed by 33 to 38; sequence SGGPDS.

The protein belongs to the tRNA(Ile)-lysidine synthase family.

It is found in the cytoplasm. It catalyses the reaction cytidine(34) in tRNA(Ile2) + L-lysine + ATP = lysidine(34) in tRNA(Ile2) + AMP + diphosphate + H(+). In terms of biological role, ligates lysine onto the cytidine present at position 34 of the AUA codon-specific tRNA(Ile) that contains the anticodon CAU, in an ATP-dependent manner. Cytidine is converted to lysidine, thus changing the amino acid specificity of the tRNA from methionine to isoleucine. This Thermobifida fusca (strain YX) protein is tRNA(Ile)-lysidine synthase.